A 490-amino-acid polypeptide reads, in one-letter code: Phosphoglucosamine mutase (490 aa).

The active-site Phosphoserine intermediate is the Ser-139. Residues Ser-139, Asp-279, Asp-281, and Asp-283 each contribute to the Mg(2+) site. Phosphoserine is present on Ser-139.

It belongs to the phosphohexose mutase family. Requires Mg(2+) as cofactor. Post-translationally, activated by phosphorylation.

It catalyses the reaction alpha-D-glucosamine 1-phosphate = D-glucosamine 6-phosphate. In terms of biological role, catalyzes the conversion of glucosamine-6-phosphate to glucosamine-1-phosphate. The polypeptide is Phosphoglucosamine mutase (Trichormus variabilis (strain ATCC 29413 / PCC 7937) (Anabaena variabilis)).